The sequence spans 191 residues: Holliday junction branch migration complex subunit RuvA (191 aa).

A domain I region spans residues 1-64; it reads MIGKLTGTLL…EDAQLLYGFA (64 aa). Residues 65 to 140 form a domain II region; it reads TAPERQAFRA…KLGADLGASH (76 aa). The segment at 140 to 142 is flexible linker; it reads HGP. The domain III stretch occupies residues 143–191; the sequence is AVSGAQADILQALLALGYNDKEAAAALKALPAQVEVSDGIKWALKALTK.

It belongs to the RuvA family. Homotetramer. Forms an RuvA(8)-RuvB(12)-Holliday junction (HJ) complex. HJ DNA is sandwiched between 2 RuvA tetramers; dsDNA enters through RuvA and exits via RuvB. An RuvB hexamer assembles on each DNA strand where it exits the tetramer. Each RuvB hexamer is contacted by two RuvA subunits (via domain III) on 2 adjacent RuvB subunits; this complex drives branch migration. In the full resolvosome a probable DNA-RuvA(4)-RuvB(12)-RuvC(2) complex forms which resolves the HJ.

The protein resides in the cytoplasm. Functionally, the RuvA-RuvB-RuvC complex processes Holliday junction (HJ) DNA during genetic recombination and DNA repair, while the RuvA-RuvB complex plays an important role in the rescue of blocked DNA replication forks via replication fork reversal (RFR). RuvA specifically binds to HJ cruciform DNA, conferring on it an open structure. The RuvB hexamer acts as an ATP-dependent pump, pulling dsDNA into and through the RuvAB complex. HJ branch migration allows RuvC to scan DNA until it finds its consensus sequence, where it cleaves and resolves the cruciform DNA. This chain is Holliday junction branch migration complex subunit RuvA, found in Verminephrobacter eiseniae (strain EF01-2).